A 62-amino-acid chain; its full sequence is U-myrmeciitoxin(01)-Mg3a (62 aa).

The signal sequence occupies residues 1–24 (MKTTVILLLAIAIIFAIMTTLTSA).

In terms of tissue distribution, expressed by the venom gland.

It localises to the secreted. In terms of biological role, may have antimicrobial properties, like most ant linear peptides. This Myrmecia gulosa (Red bulldog ant) protein is U-myrmeciitoxin(01)-Mg3a.